We begin with the raw amino-acid sequence, 331 residues long: Ferredoxin--NADP reductase (331 aa).

FAD-binding residues include Thr14, Glu33, Gln41, Tyr46, Val86, Phe120, Asp284, and Ser327.

The protein belongs to the ferredoxin--NADP reductase type 2 family. As to quaternary structure, homodimer. FAD serves as cofactor.

It catalyses the reaction 2 reduced [2Fe-2S]-[ferredoxin] + NADP(+) + H(+) = 2 oxidized [2Fe-2S]-[ferredoxin] + NADPH. The polypeptide is Ferredoxin--NADP reductase (Picrophilus torridus (strain ATCC 700027 / DSM 9790 / JCM 10055 / NBRC 100828 / KAW 2/3)).